Reading from the N-terminus, the 281-residue chain is 4-diphosphocytidyl-2-C-methyl-D-erythritol kinase (281 aa).

The active site involves lysine 15. 98–108 (PTGAGLGGGSS) is an ATP binding site. The active site involves aspartate 140.

This sequence belongs to the GHMP kinase family. IspE subfamily.

It carries out the reaction 4-CDP-2-C-methyl-D-erythritol + ATP = 4-CDP-2-C-methyl-D-erythritol 2-phosphate + ADP + H(+). The protein operates within isoprenoid biosynthesis; isopentenyl diphosphate biosynthesis via DXP pathway; isopentenyl diphosphate from 1-deoxy-D-xylulose 5-phosphate: step 3/6. Functionally, catalyzes the phosphorylation of the position 2 hydroxy group of 4-diphosphocytidyl-2C-methyl-D-erythritol. This is 4-diphosphocytidyl-2-C-methyl-D-erythritol kinase from Neisseria gonorrhoeae (strain ATCC 700825 / FA 1090).